We begin with the raw amino-acid sequence, 488 residues long: E3 ubiquitin-protein ligase TRIM39 (488 aa).

The segment at 29-70 adopts an RING-type zinc-finger fold; that stretch reads CSVCLEYLKEPVIIECGHNFCKACITRWWEDLERDFPCPVCR. A B box-type zinc finger spans residues 102–143; the sequence is RDESLCSQHHEPLSLFCYEDQEAVCLICAISHTHRPHTVVPM. Positions 107, 110, 129, and 135 each coordinate Zn(2+). The stretch at 181-250 forms a coiled coil; it reads ELKRLVESRR…AHLAAEVEGK (70 aa). Interaction with CDKN1A stretches follow at residues 268 to 307 and 359 to 488; these read KCEK…QLIA and TSGR…TDWE. In terms of domain architecture, B30.2/SPRY spans 289–484; sequence SNFPRQYFAL…NAAPLTIRPP (196 aa).

The protein belongs to the TRIM/RBCC family. In terms of assembly, interacts with MOAP1. Interacts with CDKN1A. Autoubiquitinated.

Its subcellular location is the cytoplasm. The protein resides in the cytosol. The protein localises to the mitochondrion. It is found in the nucleus. It carries out the reaction S-ubiquitinyl-[E2 ubiquitin-conjugating enzyme]-L-cysteine + [acceptor protein]-L-lysine = [E2 ubiquitin-conjugating enzyme]-L-cysteine + N(6)-ubiquitinyl-[acceptor protein]-L-lysine.. The protein operates within protein modification; protein ubiquitination. Functionally, E3 ubiquitin-protein ligase. May facilitate apoptosis by inhibiting APC/C-Cdh1-mediated poly-ubiquitination and subsequent proteasome-mediated degradation of the pro-apoptotic protein MOAP1. Regulates the G1/S transition of the cell cycle and DNA damage-induced G2 arrest by stabilizing CDKN1A/p21. Positively regulates CDKN1A/p21 stability by competing with DTL for CDKN1A/p21 binding, therefore disrupting DCX(DTL) E3 ubiquitin ligase complex-mediated CDKN1A/p21 ubiquitination and degradation. This chain is E3 ubiquitin-protein ligase TRIM39 (Trim39), found in Mus musculus (Mouse).